Here is an 80-residue protein sequence, read N- to C-terminus: Exodeoxyribonuclease 7 small subunit (80 aa).

This sequence belongs to the XseB family. Heterooligomer composed of large and small subunits.

The protein resides in the cytoplasm. It catalyses the reaction Exonucleolytic cleavage in either 5'- to 3'- or 3'- to 5'-direction to yield nucleoside 5'-phosphates.. Bidirectionally degrades single-stranded DNA into large acid-insoluble oligonucleotides, which are then degraded further into small acid-soluble oligonucleotides. The sequence is that of Exodeoxyribonuclease 7 small subunit from Rickettsia bellii (strain OSU 85-389).